The following is a 359-amino-acid chain: Olfactory receptor 8S1 (359 aa).

Residues 1-25 (MALGNHSTITEFLLLGLSADPNIRA) lie on the Extracellular side of the membrane. N-linked (GlcNAc...) asparagine glycosylation occurs at Asn-5. The chain crosses the membrane as a helical span at residues 26-46 (LLFVLFLGIYLLTIMENLMLL). Over 47–54 (LMIRADSC) the chain is Cytoplasmic. Residues 55-75 (LHKPMYFFLSHLSFVDLCFSS) form a helical membrane-spanning segment. Over 76 to 99 (VIVPKMLENLLSQRKTISVEGCLA) the chain is Extracellular. Cys-97 and Cys-189 form a disulfide bridge. A helical transmembrane segment spans residues 100–120 (QVFFVFVTAGTEACLLSGMAY). Topologically, residues 121 to 139 (DRHAAICRPLLYGQIMGKQ) are cytoplasmic. Residues 140–160 (LYMHLVWGSWGLGFLDALINV) traverse the membrane as a helical segment. Residues 161 to 197 (LLAVNMVFCEAKIIHHYSYEMPSLLPLSCSDISRSLI) are Extracellular-facing. A helical transmembrane segment spans residues 198-217 (ALLCSTLLHGLGNFLLVFLS). The Cytoplasmic segment spans residues 218–237 (YTRIISTILSISSTSGRSKA). The helical transmembrane segment at 238–258 (FSTCSAHLTAVTLYYGSGLLR) threads the bilayer. At 259–269 (HLMPNSGSPIE) the chain is on the extracellular side. Residues 270–290 (LIFSVQYTVVTPMLNSLIYSL) traverse the membrane as a helical segment. The Cytoplasmic portion of the chain corresponds to 291–359 (KNKEVKGERS…ALRAAPTALP (69 aa)). Residues 301–338 (LRDSSHLPQLHKGQARWKRPAFTEGRREPGHPELSIPV) are disordered.

This sequence belongs to the G-protein coupled receptor 1 family.

Its subcellular location is the cell membrane. Functionally, odorant receptor. The protein is Olfactory receptor 8S1 (OR8S1) of Homo sapiens (Human).